Reading from the N-terminus, the 346-residue chain is Phenylalanine--tRNA ligase alpha subunit (346 aa).

Mg(2+) is bound at residue Glu262.

Belongs to the class-II aminoacyl-tRNA synthetase family. Phe-tRNA synthetase alpha subunit type 1 subfamily. In terms of assembly, tetramer of two alpha and two beta subunits. Requires Mg(2+) as cofactor.

The protein localises to the cytoplasm. It catalyses the reaction tRNA(Phe) + L-phenylalanine + ATP = L-phenylalanyl-tRNA(Phe) + AMP + diphosphate + H(+). The polypeptide is Phenylalanine--tRNA ligase alpha subunit (Ehrlichia chaffeensis (strain ATCC CRL-10679 / Arkansas)).